Here is a 526-residue protein sequence, read N- to C-terminus: Peptide chain release factor 3 (526 aa).

Positions 9-277 (DRRRTFAIVS…TFVDHAPAPL (269 aa)) constitute a tr-type G domain. Residues 18-25 (SHPDAGKT), 86-90 (DTPGH), and 140-143 (NKLD) each bind GTP.

It belongs to the TRAFAC class translation factor GTPase superfamily. Classic translation factor GTPase family. PrfC subfamily.

The protein resides in the cytoplasm. Functionally, increases the formation of ribosomal termination complexes and stimulates activities of RF-1 and RF-2. It binds guanine nucleotides and has strong preference for UGA stop codons. It may interact directly with the ribosome. The stimulation of RF-1 and RF-2 is significantly reduced by GTP and GDP, but not by GMP. The protein is Peptide chain release factor 3 of Geobacter sulfurreducens (strain ATCC 51573 / DSM 12127 / PCA).